Consider the following 336-residue polypeptide: Phosphoribosylformylglycinamidine cyclo-ligase (336 aa).

This sequence belongs to the AIR synthase family.

The protein resides in the cytoplasm. It catalyses the reaction 2-formamido-N(1)-(5-O-phospho-beta-D-ribosyl)acetamidine + ATP = 5-amino-1-(5-phospho-beta-D-ribosyl)imidazole + ADP + phosphate + H(+). The protein operates within purine metabolism; IMP biosynthesis via de novo pathway; 5-amino-1-(5-phospho-D-ribosyl)imidazole from N(2)-formyl-N(1)-(5-phospho-D-ribosyl)glycinamide: step 2/2. The chain is Phosphoribosylformylglycinamidine cyclo-ligase from Thermoanaerobacter pseudethanolicus (strain ATCC 33223 / 39E) (Clostridium thermohydrosulfuricum).